Consider the following 160-residue polypeptide: Baculoviral IAP repeat-containing protein 5.1-B (160 aa).

The stretch at 13–83 (QRLQDFRNMY…EGWEPDDDPW (71 aa)) is one BIR repeat. The residue at position 43 (Thr43) is a Phosphothreonine; by CDK1. Cys66, Cys69, His86, and Cys93 together coordinate Zn(2+).

It belongs to the IAP family. As to quaternary structure, component of the CPC at least composed of survivin/birc5, incenp, cdca8/borealin and/or cdca9/dasra-A, and aurkb/aurora-B. Interacts directly with incenp (via N-terminus), and may weakly interact with aurkb (via N-terminus) to stabilize the complex. Interacts with GTP-bound ran in both the S and M phases of the cell cycle. Also found in a complex with ubiquitin-mediated signaling proteins including at least usp9x/xFAM, nploc4/npl4 and ufd1. Post-translationally, ubiquitination is required for centrosome-targeting.

It localises to the cytoplasm. The protein resides in the nucleus. Its subcellular location is the chromosome. It is found in the centromere. The protein localises to the cytoskeleton. It localises to the spindle. Component of the chromosomal passenger complex (CPC), a complex that acts as a key regulator of mitosis. The CPC complex has essential functions at the centromere in ensuring correct chromosome alignment and segregation and is required for chromatin-induced microtubule stabilization and spindle assembly. Stimulates the mitotic kinase activity of aurkb/aurora-B in the CPC. Does not appear to exhibit anti-apoptotic activity. CPC. Does not appear to exhibit anti-apoptotic activity. The polypeptide is Baculoviral IAP repeat-containing protein 5.1-B (birc5.1-b) (Xenopus laevis (African clawed frog)).